A 1059-amino-acid chain; its full sequence is Ubiquitin carboxyl-terminal hydrolase 36 (1059 aa).

2 disordered regions span residues 24 to 49 (VGNG…DSEM) and 94 to 148 (SNNN…KPKR). Residues 94–123 (SNNNNSSSCNGSNFGNSKVVGANGHDNGNN) show a composition bias toward low complexity. Residues 130-139 (QSESTQSGPS) show a composition bias toward polar residues. The region spanning 171-479 (TGMINVGNTC…NAYIMFYELD (309 aa)) is the USP domain. Cys-180 serves as the catalytic Nucleophile. Residue His-438 is the Proton acceptor of the active site. The segment at 505 to 673 (TVSSSSPTHT…KTPLKSSVKT (169 aa)) is disordered. Ser-508 and Ser-510 each carry phosphoserine. Residues 528-539 (GYSNGHATGSSN) are compositionally biased toward polar residues. Composition is skewed to low complexity over residues 540–560 (AQKT…NGLQ), 592–611 (NGNK…KSVN), and 633–647 (ATAT…RPTA). The span at 655-664 (MTEDSSDKPK) shows a compositional bias: basic and acidic residues. Phosphothreonine occurs at positions 673 and 682. Disordered stretches follow at residues 687-893 (LVPY…EAST), 926-998 (KELV…RYHN), and 1012-1059 (KYNR…QSSS). Phosphoserine is present on residues Ser-692 and Ser-694. Composition is skewed to low complexity over residues 729-739 (TKTNGGSLTNG) and 752-765 (SSSS…ASAA). Residue Ser-766 is modified to Phosphoserine. A compositionally biased stretch (acidic residues) spans 766 to 776 (SDDEDADEEEE). A compositionally biased stretch (polar residues) spans 779–795 (KLTNGWQPQKQSQSLTQ). Over residues 799–808 (PPSPKTPPSP) the composition is skewed to pro residues. Ser-801 bears the Phosphoserine mark. Thr-804 carries the post-translational modification Phosphothreonine. Ser-807 carries the post-translational modification Phosphoserine. A compositionally biased stretch (acidic residues) spans 825–839 (DNEDEDDDDDEDEEE). Composition is skewed to polar residues over residues 842 to 862 (QVVS…STTP) and 876 to 893 (KSQQ…EAST). 2 positions are modified to phosphothreonine: Thr-846 and Thr-861. Residues 926–940 (KELVAEAREQRQHDH) are compositionally biased toward basic and acidic residues. Positions 1048 to 1059 (QQQQQQSQQSSS) are enriched in low complexity.

Belongs to the peptidase C19 family. Interacts with atms/PAF1, but not with CycT.

The protein localises to the nucleus. It localises to the nucleolus. The enzyme catalyses Thiol-dependent hydrolysis of ester, thioester, amide, peptide and isopeptide bonds formed by the C-terminal Gly of ubiquitin (a 76-residue protein attached to proteins as an intracellular targeting signal).. In terms of biological role, required for maintaining multiple types of adult stem cells, including male and female germline, epithelial follicle cell and intestinal stem cells. May function as a transcriptional repressor by continually deubiquiting histone H2B at the promoters of genes critical for cellular differentiation, thereby preventing histone H3 'Lys-4' trimethylation (H3K4). Controls selective autophagy activation by ubiquitinated proteins. This Drosophila pseudoobscura pseudoobscura (Fruit fly) protein is Ubiquitin carboxyl-terminal hydrolase 36 (Usp36).